The following is a 493-amino-acid chain: Endothelial lipase (493 aa).

Residues 1–23 form the signal peptide; the sequence is MRDPVFLLGFWSLYCCFPAGSLT. Cys66 and Cys79 are joined by a disulfide. Residues Asn67 and Asn82 are each glycosylated (N-linked (GlcNAc...) asparagine). Residue Ser171 is the Nucleophile of the active site. Asp195 functions as the Charge relay system in the catalytic mechanism. Cysteines 254 and 274 form a disulfide. His276 (charge relay system) is an active-site residue. 2 cysteine pairs are disulfide-bonded: Cys299/Cys318 and Cys310/Cys313. 327 to 339 contributes to the heparin binding site; the sequence is KMRKKRNSKMYLK. A PLAT domain is found at 349-484; the sequence is YHYQLKVHMF…SPGQELWFYK (136 aa). Asn395 carries N-linked (GlcNAc...) asparagine glycosylation. Cys465 and Cys485 are oxidised to a cystine.

This sequence belongs to the AB hydrolase superfamily. Lipase family. Head to tail Homodimer. Interacts with apolipoprotein C-2.

Its subcellular location is the secreted. It catalyses the reaction a triacylglycerol + H2O = a diacylglycerol + a fatty acid + H(+). The catalysed reaction is a 1,2-diacyl-sn-glycero-3-phosphocholine + H2O = a 2-acyl-sn-glycero-3-phosphocholine + a fatty acid + H(+). It carries out the reaction 1,2,3-tri-(9Z-octadecenoyl)-glycerol + H2O = di-(9Z)-octadecenoylglycerol + (9Z)-octadecenoate + H(+). The enzyme catalyses 1,2,3-tributanoylglycerol + H2O = dibutanoylglycerol + butanoate + H(+). It catalyses the reaction 1,2-dihexadecanoyl-sn-glycero-3-phosphocholine + H2O = hexadecanoyl-sn-glycero-3-phosphocholine + hexadecanoate + H(+). Functionally, exerts both phospholipase and triglyceride lipase activities. More active as a phospholipase than a triglyceride lipase. Hydrolyzes triglycerides, both with short-chain fatty acyl groups (tributyrin) and long-chain fatty acyl groups (triolein) with similar levels of activity toward both types of substrates. Hydrolyzes high density lipoproteins (HDL) more efficiently than other lipoproteins. The protein is Endothelial lipase (Lipg) of Rattus norvegicus (Rat).